Here is a 398-residue protein sequence, read N- to C-terminus: Enoyl-[acyl-carrier-protein] reductase [NADH] (398 aa).

NAD(+) is bound by residues Gly48–Tyr53, Phe74–Glu75, Asp111–Ala112, and Leu139–Ala140. Tyr225 contacts substrate. Tyr235 acts as the Proton donor in catalysis. NAD(+) is bound by residues Lys244 and Val273–Thr275.

The protein belongs to the TER reductase family. Monomer.

It catalyses the reaction a 2,3-saturated acyl-[ACP] + NAD(+) = a (2E)-enoyl-[ACP] + NADH + H(+). The protein operates within lipid metabolism; fatty acid biosynthesis. In terms of biological role, involved in the final reduction of the elongation cycle of fatty acid synthesis (FAS II). Catalyzes the reduction of a carbon-carbon double bond in an enoyl moiety that is covalently linked to an acyl carrier protein (ACP). The polypeptide is Enoyl-[acyl-carrier-protein] reductase [NADH] (Paraburkholderia xenovorans (strain LB400)).